A 43-amino-acid chain; its full sequence is Snake venom metalloproteinase crotalin (43 aa).

Positions 1–43 constitute a Peptidase M12B domain; the sequence is LLRRKSHDHAQNHDGDKCLRGASLGYYQSFLNQYKPQCILNKP. A Zn(2+)-binding site is contributed by His-13.

This sequence belongs to the venom metalloproteinase (M12B) family. P-I subfamily. As to quaternary structure, monomer. It depends on Zn(2+) as a cofactor. This protein autoproteolytically degrades to 10 kDa and 14 kDa fragments in the presence of SDS. Interestingly, the two fragments, as well as reduced crotalin are able to bind vWF, indicating that the binding activity does not require a specific protein conformation. As to expression, expressed by the venom gland.

It is found in the secreted. In terms of biological role, snake venom zinc metalloproteinase that inhibits ristocin-induced platelet aggregation by abolishing the binding of von Willebrand factor (vWF) to platelet glycoprotein Ib alpha (GPIBA) through the cleavage of both GP1BA and vWF. Also has fibrinogenolytic activities by degrading the alpha- (FGA) and beta-chain (FGB) of fibrinogen. In vivo, induces a slight hemorrhage when applied to chick chorioallantoic membrane and has potent antithrombic effect. This chain is Snake venom metalloproteinase crotalin, found in Crotalus atrox (Western diamondback rattlesnake).